Here is a 119-residue protein sequence, read N- to C-terminus: Large ribosomal subunit protein bL20 (119 aa).

The protein belongs to the bacterial ribosomal protein bL20 family.

Its function is as follows. Binds directly to 23S ribosomal RNA and is necessary for the in vitro assembly process of the 50S ribosomal subunit. It is not involved in the protein synthesizing functions of that subunit. This chain is Large ribosomal subunit protein bL20, found in Nitrosospira multiformis (strain ATCC 25196 / NCIMB 11849 / C 71).